Consider the following 412-residue polypeptide: Motilin receptor (412 aa).

At 1–35 the chain is on the extracellular side; the sequence is MGSPWNGSDGPEGAREPPWPALPPCDERRCSPFPL. N-linked (GlcNAc...) asparagine glycosylation occurs at N6. The chain crosses the membrane as a helical span at residues 36-56; sequence GALVPVTAVCLCLFVVGVSGN. Topologically, residues 57–74 are cytoplasmic; it reads VVTVMLIGRYRDMRTTTN. A helical transmembrane segment spans residues 75–94; sequence LYLGSMAVSDLLILLGLPFD. The Extracellular segment spans residues 95 to 112; that stretch reads LYRLWRSRPWVFGPLLCR. A disulfide bridge connects residues C111 and C235. The helical transmembrane segment at 113–134 threads the bilayer; that stretch reads LSLYVGEGCTYATLLHMTALSV. The Cytoplasmic segment spans residues 135–157; it reads ERYLAICRPLRARVLVTRRRVRA. Residues 158-178 traverse the membrane as a helical segment; sequence LIAVLWAVALLSAGPFLFLVG. The Extracellular segment spans residues 179 to 246; the sequence is VEQDPGISVV…PSPAQLGALR (68 aa). N-linked (GlcNAc...) asparagine glycosylation is present at N192. The chain crosses the membrane as a helical span at residues 247 to 270; it reads VMLWVTTAYFFLPFLCLSILYGLI. Over 271–298 the chain is Cytoplasmic; that stretch reads GRELWSSRRPLRGPAASGRERGHRQTVR. A helical transmembrane segment spans residues 299 to 320; that stretch reads VLLVVVLAFIICWLPFHVGRII. Over 321–334 the chain is Extracellular; that stretch reads YINTEDSRMMYFSQ. The chain crosses the membrane as a helical span at residues 335-358; it reads YFNIVALQLFYLSASINPILYNLI. Residues 359 to 412 are Cytoplasmic-facing; sequence SKKYRAAAFKLLLARKSRPRGFHRSRDTAGEVAGDTGGDTVGYTETSANVKTMG.

This sequence belongs to the G-protein coupled receptor 1 family. As to expression, expressed only in thyroid, stomach, and bone marrow.

It localises to the cell membrane. Functionally, receptor for motilin. In Homo sapiens (Human), this protein is Motilin receptor (MLNR).